Here is a 614-residue protein sequence, read N- to C-terminus: Sulfite reductase [NADPH] flavoprotein alpha-component (614 aa).

The Flavodoxin-like domain occupies 79 to 217; that stretch reads LTIIFASQTG…AATEWRKQVL (139 aa). FMN-binding positions include 85-90, 132-135, and 168-177; these read SQTGNA, STNG, and LGDSSYQFFC. The 215-residue stretch at 249–463 folds into the FAD-binding FR-type domain; sequence EQPYTASLST…VEHNNNFKLP (215 aa). FAD contacts are provided by residues Thr337, Thr371, 401 to 404, 419 to 421, Tyr425, and 434 to 437; these read RLYS, TVG, and GGAS. NADP(+) is bound by residues 534-535, 540-544, and Asp576; these read SR and KVYVQ. Tyr614 contributes to the FAD binding site.

This sequence belongs to the NADPH-dependent sulphite reductase flavoprotein subunit CysJ family. In the N-terminal section; belongs to the flavodoxin family. The protein in the C-terminal section; belongs to the flavoprotein pyridine nucleotide cytochrome reductase family. Alpha(8)-beta(8). The alpha component is a flavoprotein, the beta component is a hemoprotein. Requires FAD as cofactor. FMN serves as cofactor.

It catalyses the reaction hydrogen sulfide + 3 NADP(+) + 3 H2O = sulfite + 3 NADPH + 4 H(+). It functions in the pathway sulfur metabolism; hydrogen sulfide biosynthesis; hydrogen sulfide from sulfite (NADPH route): step 1/1. In terms of biological role, component of the sulfite reductase complex that catalyzes the 6-electron reduction of sulfite to sulfide. This is one of several activities required for the biosynthesis of L-cysteine from sulfate. The flavoprotein component catalyzes the electron flow from NADPH -&gt; FAD -&gt; FMN to the hemoprotein component. This chain is Sulfite reductase [NADPH] flavoprotein alpha-component, found in Vibrio cholerae serotype O1 (strain ATCC 39315 / El Tor Inaba N16961).